The following is a 422-amino-acid chain: Ubiquitin-conjugating enzyme E2 Q1 (422 aa).

At M1 the chain carries N-acetylmethionine. Residues M1–A24 are compositionally biased toward low complexity. Disordered regions lie at residues M1–C40 and Q173–G221. A compositionally biased stretch (gly residues) spans P25–P35. Over residues V185–D200 the composition is skewed to acidic residues. The segment covering A212–G221 has biased composition (basic and acidic residues). The 165-residue stretch at Q251 to Y415 folds into the UBC core domain. The active-site Glycyl thioester intermediate is C351.

This sequence belongs to the ubiquitin-conjugating enzyme family. As to quaternary structure, monomer and homodimer. Only the homodimer is linked to ubiquitin through thiolester activation. Interacts (via N-terminus) with B4GALT1 (via N-terminal cytoplasmic domain); the interaction is direct. Post-translationally, autoubiquitinated in vitro in the presence of NEDD4L. In terms of tissue distribution, expressed in liver, brain, heart, spleen, lung, kidney, muscle, ovary, epididymis, testis and placenta. Also expressed in thymus and ES cells. Only expressed in the uterus during pregnancy. Expressed in oocytes and during subsequent embryonic development stages (4-cell stage, blastocyst, 8.5 dpc, 13.5 dpc, 16.5 dpc and 18.5 dpc).

It is found in the nucleus. The protein localises to the cell projection. Its subcellular location is the filopodium. The protein resides in the cytoplasm. It localises to the cytosol. The enzyme catalyses S-ubiquitinyl-[E1 ubiquitin-activating enzyme]-L-cysteine + [E2 ubiquitin-conjugating enzyme]-L-cysteine = [E1 ubiquitin-activating enzyme]-L-cysteine + S-ubiquitinyl-[E2 ubiquitin-conjugating enzyme]-L-cysteine.. It participates in protein modification; protein ubiquitination. In terms of biological role, catalyzes the covalent attachment of ubiquitin to other proteins. Involved in female fertility and embryo implantation. May be involved in hormonal homeostasis in females. Involved in regulation of B4GALT1 cell surface expression, B4GALT1-mediated cell adhesion to laminin and embryoid body formation. The polypeptide is Ubiquitin-conjugating enzyme E2 Q1 (Ube2q1) (Mus musculus (Mouse)).